Reading from the N-terminus, the 570-residue chain is MNTQILILAISAFLCVRADKICLGHHAVSNGTKVDTLTEKGIEVVNATETVEQKNIPKICSKGKQTIDLGQCGLLGTTIGPPQCDQFLEFSANLIIERREGDDICYPGKFDNEETLRQILRKSGGIKKENMGFTYTGVRTNGETSACRRSRSSFYAEMKWLLSNTDNGVFPQMTKSYKNTKREPALIIWGIHHSGSTAEQTRLYGSGNKLITVWSSKYQQSFAPNPGPRPQINGQSGRIDFYWLMLDPNDTVTFSFNGAFIAPDRASFLRGKSLGIQSDAQLDNNCEGECYHIGGTIISNLPFQNINSRAIGKCPRYVKQKSLMLATGMKNVPENSTHKQLTHHMRKKRGLFGAIAGFIENGWEGLIDGWYGYRHQNAQGEGTAADYKSTQSAINQITGKLNRLIEKTNQQFELIDNEFNEIEKQIGNVINWTRDSIIEVWSYNAEFLVAVENQHTIDLTDSEMNKLYEKVRRQLRENAEEDGNGCFEIFHQCDNDCMASIRNNTYDHKKYRKEAIQNRIQIDAVKLSSGYKDIILWFSFGASCFLFLAIAMVLAFICIKNGNMRCTICI.

Residues 1–18 (MNTQILILAISAFLCVRA) form the signal peptide. Topologically, residues 19-533 (DKICLGHHAV…AVKLSSGYKD (515 aa)) are extracellular. Cystine bridges form between cysteine 22–cysteine 486, cysteine 60–cysteine 286, cysteine 72–cysteine 84, cysteine 105–cysteine 147, cysteine 290–cysteine 314, and cysteine 493–cysteine 497. Residues asparagine 30 and asparagine 46 are each glycosylated (N-linked (GlcNAc...) asparagine; by host). N-linked (GlcNAc...) asparagine; by host glycosylation occurs at asparagine 249. Asparagine 335 and asparagine 431 each carry an N-linked (GlcNAc...) asparagine; by host glycan. Asparagine 503 carries N-linked (GlcNAc...) asparagine; by host glycosylation. The helical transmembrane segment at 534–554 (IILWFSFGASCFLFLAIAMVL) threads the bilayer. The Cytoplasmic portion of the chain corresponds to 555-570 (AFICIKNGNMRCTICI). 2 S-palmitoyl cysteine; by host lipidation sites follow: cysteine 566 and cysteine 569.

It belongs to the influenza viruses hemagglutinin family. Homotrimer of disulfide-linked HA1-HA2. Palmitoylated. In terms of processing, in natural infection, inactive HA is matured into HA1 and HA2 outside the cell by one or more trypsin-like, arginine-specific endoprotease secreted by the bronchial epithelial cells. One identified protease that may be involved in this process is secreted in lungs by club cells.

It is found in the virion membrane. It localises to the host apical cell membrane. Binds to sialic acid-containing receptors on the cell surface, bringing about the attachment of the virus particle to the cell. This attachment induces virion internalization of about two third of the virus particles through clathrin-dependent endocytosis and about one third through a clathrin- and caveolin-independent pathway. Plays a major role in the determination of host range restriction and virulence. Class I viral fusion protein. Responsible for penetration of the virus into the cell cytoplasm by mediating the fusion of the membrane of the endocytosed virus particle with the endosomal membrane. Low pH in endosomes induces an irreversible conformational change in HA2, releasing the fusion hydrophobic peptide. Several trimers are required to form a competent fusion pore. Its function is as follows. Binds to sialic acid-containing receptors on the cell surface, bringing about the attachment of the virus particle to the cell. This attachment induces virion internalization either through clathrin-dependent endocytosis or through clathrin- and caveolin-independent pathway. Plays a major role in the determination of host range restriction and virulence. Class I viral fusion protein. Responsible for penetration of the virus into the cell cytoplasm by mediating the fusion of the membrane of the endocytosed virus particle with the endosomal membrane. Low pH in endosomes induces an irreversible conformational change in HA2, releasing the fusion hydrophobic peptide. Several trimers are required to form a competent fusion pore. The chain is Hemagglutinin from Influenza A virus (strain A/Equine/Cambridge/1/1973 H7N7).